A 488-amino-acid polypeptide reads, in one-letter code: Acetyl-coenzyme A carboxylase carboxyl transferase subunit beta, chloroplastic (488 aa).

The CoA carboxyltransferase N-terminal domain maps to leucine 221–lysine 488. Zn(2+)-binding residues include cysteine 225, cysteine 228, cysteine 244, and cysteine 247. The segment at cysteine 225 to cysteine 247 adopts a C4-type zinc-finger fold.

It belongs to the AccD/PCCB family. Acetyl-CoA carboxylase is a heterohexamer composed of biotin carboxyl carrier protein, biotin carboxylase and 2 subunits each of ACCase subunit alpha and ACCase plastid-coded subunit beta (accD). The cofactor is Zn(2+).

The protein localises to the plastid. Its subcellular location is the chloroplast stroma. It catalyses the reaction N(6)-carboxybiotinyl-L-lysyl-[protein] + acetyl-CoA = N(6)-biotinyl-L-lysyl-[protein] + malonyl-CoA. It functions in the pathway lipid metabolism; malonyl-CoA biosynthesis; malonyl-CoA from acetyl-CoA: step 1/1. Component of the acetyl coenzyme A carboxylase (ACC) complex. Biotin carboxylase (BC) catalyzes the carboxylation of biotin on its carrier protein (BCCP) and then the CO(2) group is transferred by the transcarboxylase to acetyl-CoA to form malonyl-CoA. This Aethionema grandiflorum (Persian stone-cress) protein is Acetyl-coenzyme A carboxylase carboxyl transferase subunit beta, chloroplastic.